Consider the following 270-residue polypeptide: Protein MGF 110-1L (270 aa).

An N-terminal signal peptide occupies residues 1–26 (MLGLQIITLLFIPTLLYAYELEPLER). An A repeat occupies 1 to 146 (MLGLQIITLL…YIRKRSLQTI (146 aa)). Residue Asn75 is glycosylated (N-linked (GlcNAc...) asparagine; by host). The next 2 membrane-spanning stretches (helical) occupy residues 118-138 (WQKL…VNYI) and 146-166 (IVYL…MLYR). Residues 147-270 (VYLLVLLVIF…DNLMKKQDIM (124 aa)) form a B repeat.

Belongs to the asfivirus MGF 110 family.

The protein resides in the membrane. Plays a role in virus cell tropism, and may be required for efficient virus replication in macrophages. The polypeptide is Protein MGF 110-1L (Ornithodoros (relapsing fever ticks)).